The following is a 400-amino-acid chain: Lysophospholipid transporter LplT (400 aa).

Transmembrane regions (helical) follow at residues 19–39 (VIVAQFLSAFGDNALLFATLA), 53–73 (VLQMVFVGAYILFAPFVGQIA), 91–111 (AGAAGICLGVNPFVGYTLVGI), 139–159 (LMEASTIAAILLGSVAGGVLA), 164–184 (IAALVACALAYAGAVAANLFI), 195–213 (SWRLSAMTRSFFCACVVLW), 227–247 (LFWGAGVTLRFLLVLWVPVAL), 257–277 (YLNAMVAVGIVVGAGAAAKLV), 281–301 (TVSRCMPAGILIGVVVAIFSL), 304–324 (ALLPAYALLLLIGMLGGFFVV), 352–372 (NSAMLLMLGLYSLAVLVGVPA), and 373–393 (VAIGIGFGVLFALAIAALWIW).

It belongs to the major facilitator superfamily. LplT (TC 2.A.1.42) family.

Its subcellular location is the cell inner membrane. Its function is as follows. Catalyzes the facilitated diffusion of 2-acyl-glycero-3-phosphoethanolamine (2-acyl-GPE) into the cell. The sequence is that of Lysophospholipid transporter LplT from Salmonella typhi.